The primary structure comprises 197 residues: MLERIKDSFTESIQTKIDASEALPESIAKAAEMMVQCLLGGNKILACGNGGSAGDAQHFSAELLNRYEIERPPLPAIALSCDTSTITAIANDYSYDEIYSKQIMALGQPGDILLAISTSGNSGNVIKAMEAALSRDMTIVSLTGKDGGAMAGLLSVNDVEIRVPSNVTARIQEVHLLAIHCLCDNIDRTLFPQDEQA.

The region spanning 34-196 (MVQCLLGGNK…DRTLFPQDEQ (163 aa)) is the SIS domain. Residue 49–51 (NGG) coordinates substrate. The Zn(2+) site is built by histidine 58 and glutamate 62. Residues glutamate 62, 91-92 (ND), 117-119 (STS), serine 122, and glutamine 172 each bind substrate. Zn(2+) is bound by residues glutamine 172 and histidine 180.

The protein belongs to the SIS family. GmhA subfamily. In terms of assembly, homotetramer. Requires Zn(2+) as cofactor.

Its subcellular location is the cytoplasm. It catalyses the reaction 2 D-sedoheptulose 7-phosphate = D-glycero-alpha-D-manno-heptose 7-phosphate + D-glycero-beta-D-manno-heptose 7-phosphate. It participates in carbohydrate biosynthesis; D-glycero-D-manno-heptose 7-phosphate biosynthesis; D-glycero-alpha-D-manno-heptose 7-phosphate and D-glycero-beta-D-manno-heptose 7-phosphate from sedoheptulose 7-phosphate: step 1/1. Functionally, catalyzes the isomerization of sedoheptulose 7-phosphate in D-glycero-D-manno-heptose 7-phosphate. The protein is Phosphoheptose isomerase of Shewanella piezotolerans (strain WP3 / JCM 13877).